We begin with the raw amino-acid sequence, 123 residues long: D-ribose pyranase (123 aa).

The active-site Proton donor is H20. Substrate contacts are provided by residues D28, H90, and Y112–N114.

This sequence belongs to the RbsD / FucU family. RbsD subfamily. As to quaternary structure, homodecamer.

The protein localises to the cytoplasm. It catalyses the reaction beta-D-ribopyranose = beta-D-ribofuranose. Its pathway is carbohydrate metabolism; D-ribose degradation; D-ribose 5-phosphate from beta-D-ribopyranose: step 1/2. Functionally, catalyzes the interconversion of beta-pyran and beta-furan forms of D-ribose. This is D-ribose pyranase from Corynebacterium glutamicum (strain ATCC 13032 / DSM 20300 / JCM 1318 / BCRC 11384 / CCUG 27702 / LMG 3730 / NBRC 12168 / NCIMB 10025 / NRRL B-2784 / 534).